A 75-amino-acid polypeptide reads, in one-letter code: uncharacterized protein (75 aa).

This is an uncharacterized protein from Vaccinia virus (strain Copenhagen) (VACV).